Here is a 343-residue protein sequence, read N- to C-terminus: Phenylalanine--tRNA ligase alpha subunit (343 aa).

Position 256 (Glu256) interacts with Mg(2+).

Belongs to the class-II aminoacyl-tRNA synthetase family. Phe-tRNA synthetase alpha subunit type 1 subfamily. In terms of assembly, tetramer of two alpha and two beta subunits. Mg(2+) is required as a cofactor.

Its subcellular location is the cytoplasm. It carries out the reaction tRNA(Phe) + L-phenylalanine + ATP = L-phenylalanyl-tRNA(Phe) + AMP + diphosphate + H(+). This chain is Phenylalanine--tRNA ligase alpha subunit, found in Aster yellows witches'-broom phytoplasma (strain AYWB).